Consider the following 78-residue polypeptide: Large ribosomal subunit protein bL28 (78 aa).

Residues 1 to 21 (MSRVCQVTGKRPMSGNNRSHA) form a disordered region.

This sequence belongs to the bacterial ribosomal protein bL28 family.

This Photorhabdus laumondii subsp. laumondii (strain DSM 15139 / CIP 105565 / TT01) (Photorhabdus luminescens subsp. laumondii) protein is Large ribosomal subunit protein bL28.